The primary structure comprises 627 residues: tRNA uridine 5-carboxymethylaminomethyl modification enzyme MnmG (627 aa).

Residues 13 to 18, valine 125, and serine 180 contribute to the FAD site; that span reads GGGHAG. 274–288 provides a ligand contact to NAD(+); that stretch reads GPRYCPSIEDKVVRF. Residue glutamine 371 coordinates FAD.

It belongs to the MnmG family. Homodimer. Heterotetramer of two MnmE and two MnmG subunits. FAD is required as a cofactor.

It localises to the cytoplasm. In terms of biological role, NAD-binding protein involved in the addition of a carboxymethylaminomethyl (cmnm) group at the wobble position (U34) of certain tRNAs, forming tRNA-cmnm(5)s(2)U34. In Francisella philomiragia subsp. philomiragia (strain ATCC 25017 / CCUG 19701 / FSC 153 / O#319-036), this protein is tRNA uridine 5-carboxymethylaminomethyl modification enzyme MnmG.